We begin with the raw amino-acid sequence, 669 residues long: Galactocerebrosidase (669 aa).

Residues 1 to 26 (MTAAAGSAGHAAVPLLLCALLVPGGA) form the signal peptide. The substrate site is built by Thr93, Trp135, and Asn181. Glu182 (proton donor/acceptor) is an active-site residue. Glu258 acts as the Nucleophile in catalysis. Cys271 and Cys378 are joined by a disulfide. Asn363 carries N-linked (GlcNAc...) asparagine glycosylation. Arg380 is a substrate binding site. N-linked (GlcNAc...) asparagine glycosylation is found at Asn387, Asn543, and Asn586.

It belongs to the glycosyl hydrolase 59 family.

It is found in the lysosome. It carries out the reaction a beta-D-galactosyl-(1&lt;-&gt;1')-N-acylsphing-4-enine + H2O = an N-acylsphing-4-enine + D-galactose. It catalyses the reaction beta-D-galactosyl-(1&lt;-&gt;1)-sphing-4-enine + H2O = sphing-4-enine + D-galactose. The catalysed reaction is a D-galactosylceramide + H2O = an N-acyl-sphingoid base + D-galactose. Its function is as follows. Hydrolyzes the galactose ester bonds of glycolipids such as galactosylceramide and galactosylsphingosine. Enzyme with very low activity responsible for the lysosomal catabolism of galactosylceramide, a major lipid in myelin, kidney and epithelial cells of small intestine and colon. This Canis lupus familiaris (Dog) protein is Galactocerebrosidase.